We begin with the raw amino-acid sequence, 97 residues long: Ferredoxin-like protein (97 aa).

Residues 56 to 86 (GQVEVIADGCMECGTCRVLCEESGDIDWSYP) enclose the 4Fe-4S ferredoxin-type domain.

It to ferredoxins from P.putida and C.tartarivorum, ferredoxin I from A.vinelandii, ferredoxin II from D.desulfuricans.

Functionally, could be a 3Fe-4S cluster-containing protein. The chain is Ferredoxin-like protein (fixX) from Sinorhizobium fredii (strain NBRC 101917 / NGR234).